A 618-amino-acid polypeptide reads, in one-letter code: DELLA protein SLN1 (618 aa).

The disordered stretch occupies residues 1-36 (MKREYQDGGGSGGGGDEMGSSRDKMMVSSSEAGEGE). Residues 7 to 17 (DGGGSGGGGDE) show a composition bias toward gly residues. The short motif at 39 to 43 (DELLA) is the DELLA motif element. Disordered stretches follow at residues 106-137 (LNAP…YFDL) and 159-197 (APAD…GAAR). The segment covering 108–118 (APPPPLPPAPP) has biased composition (pro residues). Low complexity-rich tracts occupy residues 119 to 128 (QLNASTSSTV) and 176 to 197 (TGGS…GAAR). The 394-residue stretch at 221–614 (VDTQEAGIRL…RPLIATSAWR (394 aa)) folds into the GRAS domain. Residues 228–284 (IRLVHALLACAEAVQQENLSAAEALVKQIPLLAASQGGAMRKVAAYFGEALARRVFR) form a leucine repeat I (LRI) region. The short motif at 235–239 (LACAE) is the LxCxE motif element. The VHIID stretch occupies residues 303-368 (HAHFYESCPY…GGPPSFRLTG (66 aa)). Residues 334–338 (VHVVD) carry the VHIID motif. The interval 382–421 (QVGWKLAQFAHTIRVDFQYRGLVAATLADLEPFMLQPEGE) is leucine repeat II (LRII). The tract at residues 431–535 (IAVNSVFEMH…EVYLGRQICN (105 aa)) is PFYRE. Positions 538 to 614 (ACEGTERTER…RPLIATSAWR (77 aa)) are SAW.

It belongs to the GRAS family. DELLA subfamily. Phosphorylated. In terms of processing, ubiquitinated. Upon GA application it is ubiquitinated, leading to its subsequent degradation. In terms of tissue distribution, apparently restricted to regions where growth is occurring in the leaf blade. Localizes almost exclusively to the basal elongation zone (EZ) for the elongating blades of L1, L2 and L3. More detailed fractionation of the L3 blade shows that in cv. Himalaya, it is preferentially localized to the basal third of the EZ, but its presence can still be detected toward the end of the EZ (at protein level).

It localises to the nucleus. Its function is as follows. Probable transcriptional regulator that acts as a repressor of the gibberellin (GA) signaling pathway. Probably acts by participating in large multiprotein complexes that repress transcription of GA-inducible genes. Upon GA application, it is degraded by the proteasome, allowing the GA signaling pathway. Acts as a negative regulator of GAMYB gene expression. In Hordeum vulgare (Barley), this protein is DELLA protein SLN1 (SLN1).